Consider the following 194-residue polypeptide: Holliday junction branch migration complex subunit RuvA (194 aa).

The segment at 1-64 is domain I; sequence MIARLSGILV…EDAQLLYGFG (64 aa). The interval 65 to 141 is domain II; the sequence is SDQERATFRQ…FAIDGGTALA (77 aa). The flexible linker stretch occupies residues 141 to 144; the sequence is AGSN. The domain III stretch occupies residues 145 to 194; that stretch reads PAKSASSDVLNALLALGYNEREALAAVKQLPADIAVAEGIKLSLKSLSKT.

This sequence belongs to the RuvA family. In terms of assembly, homotetramer. Forms an RuvA(8)-RuvB(12)-Holliday junction (HJ) complex. HJ DNA is sandwiched between 2 RuvA tetramers; dsDNA enters through RuvA and exits via RuvB. An RuvB hexamer assembles on each DNA strand where it exits the tetramer. Each RuvB hexamer is contacted by two RuvA subunits (via domain III) on 2 adjacent RuvB subunits; this complex drives branch migration. In the full resolvosome a probable DNA-RuvA(4)-RuvB(12)-RuvC(2) complex forms which resolves the HJ.

It is found in the cytoplasm. Functionally, the RuvA-RuvB-RuvC complex processes Holliday junction (HJ) DNA during genetic recombination and DNA repair, while the RuvA-RuvB complex plays an important role in the rescue of blocked DNA replication forks via replication fork reversal (RFR). RuvA specifically binds to HJ cruciform DNA, conferring on it an open structure. The RuvB hexamer acts as an ATP-dependent pump, pulling dsDNA into and through the RuvAB complex. HJ branch migration allows RuvC to scan DNA until it finds its consensus sequence, where it cleaves and resolves the cruciform DNA. The polypeptide is Holliday junction branch migration complex subunit RuvA (Methylobacillus flagellatus (strain ATCC 51484 / DSM 6875 / VKM B-1610 / KT)).